The chain runs to 361 residues: MADRVYNFSAGPATLPFEVLEQAGKDIVNFKETGSGLIEISHRSPEFIEVIEKTESLVRELLEVPDNYKVLFLQGGASSQFFMVPMNLLGAGKKATYLNTGTWAKKAIKEAQLFGDIDVAYSSEESIFNHVPANDAYQVAEESEYLYFASNNTIYGTQFETMPQSKKMLVADMSSDIFSRKVDVSKFGLIFAGAQKNLGPAGVTLVIIRDDLLEKTPAHTPTMLSYKTHADKGSMFNTPPCFAIYVMGEVLAWLKNLGGVEKIEEINREKAALLYSQIDASDYYRVHAQDGSRSLMNVTFNLPTAELEAKFIAEASALQMKGLKGHRSIGGCRASIYNAFPREGVVKLVEFMQVFAANNPA.

L-glutamate is bound at residue arginine 43. Residues 77–78 (AS), tryptophan 103, threonine 153, aspartate 172, and glutamine 195 contribute to the pyridoxal 5'-phosphate site. The residue at position 196 (lysine 196) is an N6-(pyridoxal phosphate)lysine. Pyridoxal 5'-phosphate is bound at residue 237–238 (NT).

Belongs to the class-V pyridoxal-phosphate-dependent aminotransferase family. SerC subfamily. Homodimer. Requires pyridoxal 5'-phosphate as cofactor.

Its subcellular location is the cytoplasm. It carries out the reaction O-phospho-L-serine + 2-oxoglutarate = 3-phosphooxypyruvate + L-glutamate. The enzyme catalyses 4-(phosphooxy)-L-threonine + 2-oxoglutarate = (R)-3-hydroxy-2-oxo-4-phosphooxybutanoate + L-glutamate. It participates in amino-acid biosynthesis; L-serine biosynthesis; L-serine from 3-phospho-D-glycerate: step 2/3. The protein operates within cofactor biosynthesis; pyridoxine 5'-phosphate biosynthesis; pyridoxine 5'-phosphate from D-erythrose 4-phosphate: step 3/5. Catalyzes the reversible conversion of 3-phosphohydroxypyruvate to phosphoserine and of 3-hydroxy-2-oxo-4-phosphonooxybutanoate to phosphohydroxythreonine. This chain is Phosphoserine aminotransferase, found in Desulfotalea psychrophila (strain LSv54 / DSM 12343).